Here is a 512-residue protein sequence, read N- to C-terminus: Probable amidase At4g34880 (512 aa).

Active-site charge relay system residues include Lys-117 and Ser-198. Ser-222 acts as the Acyl-ester intermediate in catalysis.

The protein belongs to the amidase family. Expressed in vasculature of roots, cotyledons, leaves and sepals.

The enzyme catalyses a monocarboxylic acid amide + H2O = a monocarboxylate + NH4(+). This chain is Probable amidase At4g34880, found in Arabidopsis thaliana (Mouse-ear cress).